The chain runs to 1055 residues: Kinesin-like protein KIN-7D, mitochondrial (1055 aa).

Residues 1-23 (MASSSSRTRSSRPPSPASSTSSS) show a composition bias toward low complexity. The interval 1–36 (MASSSSRTRSSRPPSPASSTSSSHLSNRLIPRSNST) is disordered. A mitochondrion-targeting transit peptide spans 1-96 (MASSSSRTRS…PMDDTISSER (96 aa)). The Kinesin motor domain occupies 98–415 (SISVTVRFRP…LKFASRAKSI (318 aa)). Position 178-185 (178-185 (GVTSSGKT)) interacts with ATP. 3 coiled-coil regions span residues 419–503 (ASRN…ILVS), 618–653 (PENSQTQIQNLEREIHEKQRQMRGLEQLIIESGEAS), and 694–823 (LQEK…LAQT). The tract at residues 826-856 (PMNGVNRKYNDGARSGRKGRISSSRSSGDEF) is disordered. A coiled-coil region spans residues 880-911 (LESALAEKEFIEDEYRKKAEEAKRREEALEND). Positions 926 to 963 (NGALPEPNGTDPGRELEKSQSHAVLKERQVSSAPRQPE) are disordered. Residues 937-954 (PGRELEKSQSHAVLKERQ) are compositionally biased toward basic and acidic residues. The RING-type zinc-finger motif lies at 1008 to 1043 (CKVCFESPTAAILLPCRHFCLCKSCSLACSECPICR).

This sequence belongs to the TRAFAC class myosin-kinesin ATPase superfamily. Kinesin family. KIN-7 subfamily.

It localises to the mitochondrion. The protein is Kinesin-like protein KIN-7D, mitochondrial of Arabidopsis thaliana (Mouse-ear cress).